We begin with the raw amino-acid sequence, 301 residues long: Glycine--tRNA ligase alpha subunit (301 aa).

The protein belongs to the class-II aminoacyl-tRNA synthetase family. Tetramer of two alpha and two beta subunits.

The protein resides in the cytoplasm. It catalyses the reaction tRNA(Gly) + glycine + ATP = glycyl-tRNA(Gly) + AMP + diphosphate. The protein is Glycine--tRNA ligase alpha subunit of Nitrosospira multiformis (strain ATCC 25196 / NCIMB 11849 / C 71).